The following is a 644-amino-acid chain: Chaperone protein HtpG (644 aa).

Residues 1–352 (MNARVEQLEF…AQDMSLNVSR (352 aa)) are a; substrate-binding. Positions 353–566 (EILQQDRQIK…AFGITPALAR (214 aa)) are b. The tract at residues 567 to 644 (LYRASGQDIP…ILADRLARTL (78 aa)) is c.

Belongs to the heat shock protein 90 family. In terms of assembly, homodimer.

It is found in the cytoplasm. Its function is as follows. Molecular chaperone. Has ATPase activity. This chain is Chaperone protein HtpG, found in Mycobacterium avium (strain 104).